The sequence spans 331 residues: MAKIYTDKDASLEPLKGKTIAVIGYGIQGRAQALNLRDSGLKVIIGLRKGGNSWNLAVSEGFEVYEVSDAVAQADVIMVLIPDMEQPKVWQNQIAPFLKEGAVVDFAHGFNIHYGLIKPPKNVDVIMVAPKAPGKAVREEFLAGRGVPALVAVHQDYSGAALKYALAIAKGIGATRAGVIETTFAEETETDLIGEQIVLVGGLMELIKKGFEVLVEMGYQPEVAYFEVLNEAKLIMDLIWQRGIYGMLNGVSDTAKYGGLTVGPKIIDEEVKKKMRIFALRVKSGEFAKEWVEEYARGGLTLKKLMESARTHPIEIVGAEMRKLLFGRQQE.

Residues 2 to 182 form the KARI N-terminal Rossmann domain; that stretch reads AKIYTDKDAS…GATRAGVIET (181 aa). Residues 25–28, arginine 48, serine 53, and 83–86 contribute to the NADP(+) site; these read YGIQ and DMEQ. Histidine 108 is a catalytic residue. Glycine 134 provides a ligand contact to NADP(+). The KARI C-terminal knotted domain maps to 183–328; the sequence is TFAEETETDL…AEMRKLLFGR (146 aa). Aspartate 191, glutamate 195, glutamate 227, and glutamate 231 together coordinate Mg(2+). Serine 252 is a binding site for substrate.

Belongs to the ketol-acid reductoisomerase family. Mg(2+) serves as cofactor.

It catalyses the reaction (2R)-2,3-dihydroxy-3-methylbutanoate + NADP(+) = (2S)-2-acetolactate + NADPH + H(+). It carries out the reaction (2R,3R)-2,3-dihydroxy-3-methylpentanoate + NADP(+) = (S)-2-ethyl-2-hydroxy-3-oxobutanoate + NADPH + H(+). The protein operates within amino-acid biosynthesis; L-isoleucine biosynthesis; L-isoleucine from 2-oxobutanoate: step 2/4. Its pathway is amino-acid biosynthesis; L-valine biosynthesis; L-valine from pyruvate: step 2/4. In terms of biological role, involved in the biosynthesis of branched-chain amino acids (BCAA). Catalyzes an alkyl-migration followed by a ketol-acid reduction of (S)-2-acetolactate (S2AL) to yield (R)-2,3-dihydroxy-isovalerate. In the isomerase reaction, S2AL is rearranged via a Mg-dependent methyl migration to produce 3-hydroxy-3-methyl-2-ketobutyrate (HMKB). In the reductase reaction, this 2-ketoacid undergoes a metal-dependent reduction by NADPH to yield (R)-2,3-dihydroxy-isovalerate. In Pyrobaculum islandicum (strain DSM 4184 / JCM 9189 / GEO3), this protein is Ketol-acid reductoisomerase (NADP(+)).